Reading from the N-terminus, the 202-residue chain is Probable nicotinate-nucleotide adenylyltransferase (202 aa).

The protein belongs to the NadD family.

It carries out the reaction nicotinate beta-D-ribonucleotide + ATP + H(+) = deamido-NAD(+) + diphosphate. Its pathway is cofactor biosynthesis; NAD(+) biosynthesis; deamido-NAD(+) from nicotinate D-ribonucleotide: step 1/1. Functionally, catalyzes the reversible adenylation of nicotinate mononucleotide (NaMN) to nicotinic acid adenine dinucleotide (NaAD). This is Probable nicotinate-nucleotide adenylyltransferase from Clostridium perfringens (strain ATCC 13124 / DSM 756 / JCM 1290 / NCIMB 6125 / NCTC 8237 / Type A).